The chain runs to 1288 residues: 5-oxoprolinase (1288 aa).

Threonine 151 is subject to Phosphothreonine. The interval 1248-1272 (PGGGGYGDPEDPAPPPGSPPQALAF) is disordered. Position 1265 is a phosphoserine (serine 1265).

It belongs to the oxoprolinase family. Homodimer.

The protein resides in the cytoplasm. It is found in the cytosol. It carries out the reaction 5-oxo-L-proline + ATP + 2 H2O = L-glutamate + ADP + phosphate + H(+). Functionally, catalyzes the cleavage of 5-oxo-L-proline to form L-glutamate coupled to the hydrolysis of ATP to ADP and inorganic phosphate. The protein is 5-oxoprolinase of Homo sapiens (Human).